A 211-amino-acid chain; its full sequence is Dephospho-CoA kinase (211 aa).

One can recognise a DPCK domain in the interval 3 to 206 (VLGLTGGIGS…PGMKGPDPHA (204 aa)). An ATP-binding site is contributed by 11–16 (GSGKSI).

It belongs to the CoaE family.

It is found in the cytoplasm. It catalyses the reaction 3'-dephospho-CoA + ATP = ADP + CoA + H(+). Its pathway is cofactor biosynthesis; coenzyme A biosynthesis; CoA from (R)-pantothenate: step 5/5. Functionally, catalyzes the phosphorylation of the 3'-hydroxyl group of dephosphocoenzyme A to form coenzyme A. This Syntrophotalea carbinolica (strain DSM 2380 / NBRC 103641 / GraBd1) (Pelobacter carbinolicus) protein is Dephospho-CoA kinase.